Reading from the N-terminus, the 2258-residue chain is Probable serine/threonine-protein kinase ifkA (2258 aa).

Disordered regions lie at residues 43–108 (RVNS…HQMG) and 189–308 (EMNN…KEND). Residues 45–57 (NSSDDINNNNNNN) are compositionally biased toward low complexity. The segment covering 58–100 (NDDDDDNDDYDDSDDENSDSDYDDYDDSDDENSDDEFYSDDED) has biased composition (acidic residues). Positions 191-301 (NNLTNSNNSN…NKELIDNNNN (111 aa)) are enriched in low complexity. Residues 273-309 (NNNNNISNNKINKINNNNNNKELIDNNNNNKDKENDL) are a coiled coil. Positions 319–691 (WKKGSCIERK…AGILLKHPFL (373 aa)) constitute a Protein kinase 1 domain. Residues 325-333 (IERKSNYSV) and lysine 348 each bind ATP. The segment at 358–398 (SSSSLTSLSNSNNNNSNNNNNNNNNNNNNNNNNNNNNNNNN) is disordered. Low complexity predominate over residues 359–398 (SSSLTSLSNSNNNNSNNNNNNNNNNNNNNNNNNNNNNNNN). Catalysis depends on aspartate 498, which acts as the Proton acceptor. 2 disordered regions span residues 741 to 768 (KSQTPNNNNDNNNLASSNELLSSSNGSN) and 782 to 870 (PLAT…MTPL). Residues 746–768 (NNNNDNNNLASSNELLSSSNGSN) are compositionally biased toward low complexity. The segment covering 782 to 791 (PLATSSSLDN) has biased composition (polar residues). The segment covering 793-805 (TPPPSRPISPKPS) has biased composition (pro residues). A compositionally biased stretch (low complexity) spans 841–870 (PQQNFNTPPTTTTTTTTPTATPTTPTMTPL). Residues 894-1482 (FEEIEMIGKG…TKQLLESGLL (589 aa)) enclose the Protein kinase 2 domain. ATP is bound by residues 900–908 (IGKGGFGVV) and lysine 923. Low complexity predominate over residues 1053–1094 (TLSSSNTSSSSSLLSNNKSKILNTSKSTSTNTSTSTSTSNTN). Residues 1053 to 1259 (TLSSSNTSSS…SSSRKKPPKE (207 aa)) form a disordered region. Over residues 1095–1106 (KNKKISKKKKSK) the composition is skewed to basic residues. The segment covering 1156–1185 (NNNNNNDNNNNYHSDNESDSFSGSISMSDG) has biased composition (low complexity). Positions 1206-1233 (DENENDDDDEEDDDDEYDEEDDDYETFD) are enriched in acidic residues. Low complexity predominate over residues 1242-1251 (SNNSKLSTSS). Aspartate 1313 (proton acceptor) is an active-site residue. Disordered stretches follow at residues 1343–1370 (KSDDLNSSTSNTANNINLSSSTNSTAQQ) and 2048–2104 (GSGG…QQTS). Low complexity predominate over residues 1347–1368 (LNSSTSNTANNINLSSSTNSTA). Positions 2048–2072 (GSGGSGGSGGGSSMSSGGGGGGNSN) are enriched in gly residues. Residues 2085 to 2099 (SNQSTSSSGNSNNSN) show a composition bias toward low complexity.

Belongs to the protein kinase superfamily. Ser/Thr protein kinase family.

It catalyses the reaction L-seryl-[protein] + ATP = O-phospho-L-seryl-[protein] + ADP + H(+). The enzyme catalyses L-threonyl-[protein] + ATP = O-phospho-L-threonyl-[protein] + ADP + H(+). Phosphorylates eIF2-alpha, from 1 to 7 hours after the onset of development or during the preaggregation state, resulting in a shift from polysomes to free ribosomes for bulk mRNA. This chain is Probable serine/threonine-protein kinase ifkA (ifkA), found in Dictyostelium discoideum (Social amoeba).